The chain runs to 130 residues: Large ribosomal subunit protein bL19 (130 aa).

The protein belongs to the bacterial ribosomal protein bL19 family.

Functionally, this protein is located at the 30S-50S ribosomal subunit interface and may play a role in the structure and function of the aminoacyl-tRNA binding site. The sequence is that of Large ribosomal subunit protein bL19 from Cupriavidus taiwanensis (strain DSM 17343 / BCRC 17206 / CCUG 44338 / CIP 107171 / LMG 19424 / R1) (Ralstonia taiwanensis (strain LMG 19424)).